We begin with the raw amino-acid sequence, 289 residues long: tRNA (adenine(58)-N(1))-methyltransferase catalytic subunit TRMT61A (289 aa).

Serine 2 is subject to N-acetylserine. Substrate-binding positions include 20–22, 35–42, 64–65, 85–89, and 110–117; these read LGH, QTQTRHGV, GW, QILYS, and SGTGSGSV. S-adenosyl-L-methionine is bound by residues leucine 87, 114–116, glutamate 135, arginine 140, 163–164, and aspartate 181; these read SGS and DV. Substrate contacts are provided by residues 180 to 183 and 205 to 212; these read LDIP and SFSPCIEQ. Residues 245-272 form a disordered region; it reads LPPPDLGTGTDGPAGSDTSPFRSGTPMK. Residues 250-259 show a composition bias toward low complexity; sequence LGTGTDGPAG. At serine 263 the chain carries Phosphoserine. Threonine 278 lines the substrate pocket.

The protein belongs to the class I-like SAM-binding methyltransferase superfamily. TRM61 family. Heterotetramer; composed of two copies of TRMT6 and two copies of TRMT61A.

The protein resides in the nucleus. The enzyme catalyses adenosine(58) in tRNA + S-adenosyl-L-methionine = N(1)-methyladenosine(58) in tRNA + S-adenosyl-L-homocysteine + H(+). The catalysed reaction is an adenosine in mRNA + S-adenosyl-L-methionine = an N(1)-methyladenosine in mRNA + S-adenosyl-L-homocysteine + H(+). Functionally, catalytic subunit of tRNA (adenine-N(1)-)-methyltransferase, which catalyzes the formation of N(1)-methyladenine at position 58 (m1A58) in initiator methionyl-tRNA. Catalytic subunit of mRNA N(1)-methyltransferase complex, which mediates methylation of adenosine residues at the N(1) position of a small subset of mRNAs: N(1) methylation takes place in tRNA T-loop-like structures of mRNAs and is only present at low stoichiometries. The sequence is that of tRNA (adenine(58)-N(1))-methyltransferase catalytic subunit TRMT61A (TRMT61A) from Homo sapiens (Human).